The following is a 497-amino-acid chain: Pseudooxynicotine dehydrogenase (497 aa).

Residues 1–43 (MANDKGDISKDGVSRRKFLGGAVIGAAAAAGVGSQILSLSATA) constitute a signal peptide (tat-type signal). Positions 70, 89, 97, 114, 286, 462, and 472 each coordinate FAD.

Belongs to the flavin monoamine oxidase family. As to quaternary structure, homodimer. FAD is required as a cofactor. Predicted to be exported by the Tat system. The position of the signal peptide cleavage has not been experimentally proven.

The protein resides in the periplasm. The catalysed reaction is pseudooxynicotine + 2 Fe(III)-[cytochrome c] + H2O = 4-oxo-4-(pyridin-3-yl)butanal + methylamine + 2 Fe(II)-[cytochrome c] + 2 H(+). The protein operates within alkaloid degradation; nicotine degradation. Its activity is regulated as follows. Strongly inhibited by Ag(+), Co(2+), Cu(2+) and Hg(2+). Its function is as follows. Involved in nicotine degradation. Catalyzes the deamination of pseudooxynicotine to 3-succinoylsemialdehyde-pyridine. The protein is Pseudooxynicotine dehydrogenase of Pseudomonas sp.